The primary structure comprises 554 residues: Glucose-6-phosphate isomerase (554 aa).

The active-site Proton donor is the Glu-359. Active-site residues include His-390 and Lys-518.

This sequence belongs to the GPI family.

The protein resides in the cytoplasm. The catalysed reaction is alpha-D-glucose 6-phosphate = beta-D-fructose 6-phosphate. It participates in carbohydrate biosynthesis; gluconeogenesis. It functions in the pathway carbohydrate degradation; glycolysis; D-glyceraldehyde 3-phosphate and glycerone phosphate from D-glucose: step 2/4. In terms of biological role, catalyzes the reversible isomerization of glucose-6-phosphate to fructose-6-phosphate. This is Glucose-6-phosphate isomerase from Pseudomonas putida (strain GB-1).